The primary structure comprises 257 residues: Snake venom serine protease KN11 (257 aa).

The signal sequence occupies residues 1–18; sequence MVLIRVLANLLILQLSYA. Residues 19 to 24 constitute a propeptide that is removed on maturation; that stretch reads QKSSEL. Positions 25–248 constitute a Peptidase S1 domain; sequence VTGGHPCNIN…HLDWIKSIIA (224 aa). 6 disulfide bridges follow: C31–C162, C49–C65, C97–C255, C141–C209, C173–C188, and C199–C224. Catalysis depends on charge relay system residues H64 and D109. N-linked (GlcNAc...) asparagine glycans are attached at residues N120 and N121. S203 (charge relay system) is an active-site residue.

The protein belongs to the peptidase S1 family. Snake venom subfamily. As to quaternary structure, monomer. As to expression, expressed by the venom gland.

It localises to the secreted. In terms of biological role, snake venom serine protease that may act in the hemostasis system of the prey. The polypeptide is Snake venom serine protease KN11 (Trimeresurus stejnegeri (Chinese green tree viper)).